The following is a 29-amino-acid chain: Kunitz-type trypsin inhibitor IVTI (29 aa).

The protein belongs to the protease inhibitor I3 (leguminous Kunitz-type inhibitor) family. In terms of assembly, monomer and dimer.

Its function is as follows. Inhibits bovine trypsin but not chymotrypsin. Also inhibits trypsin-like enzymes from midgut of several lepidopteran species and inhibits larval development in those species. Has fungicidal activity against yeast C.buinensis. Has a bacteriostatic effect against E.coli. Is not cytotoxic. This chain is Kunitz-type trypsin inhibitor IVTI, found in Inga vera (River koko).